A 185-amino-acid chain; its full sequence is Endoribonuclease YbeY (185 aa).

Zn(2+) is bound by residues His142, His146, and His152.

Belongs to the endoribonuclease YbeY family. The cofactor is Zn(2+).

It localises to the cytoplasm. Functionally, single strand-specific metallo-endoribonuclease involved in late-stage 70S ribosome quality control and in maturation of the 3' terminus of the 16S rRNA. This is Endoribonuclease YbeY from Parvibaculum lavamentivorans (strain DS-1 / DSM 13023 / NCIMB 13966).